We begin with the raw amino-acid sequence, 380 residues long: Succinyl-diaminopimelate desuccinylase (380 aa).

A Zn(2+)-binding site is contributed by H69. D71 is a catalytic residue. Zn(2+) is bound at residue D102. E135 acts as the Proton acceptor in catalysis. Positions 136, 164, and 353 each coordinate Zn(2+).

It belongs to the peptidase M20A family. DapE subfamily. As to quaternary structure, homodimer. Zn(2+) serves as cofactor. It depends on Co(2+) as a cofactor.

The enzyme catalyses N-succinyl-(2S,6S)-2,6-diaminopimelate + H2O = (2S,6S)-2,6-diaminopimelate + succinate. It functions in the pathway amino-acid biosynthesis; L-lysine biosynthesis via DAP pathway; LL-2,6-diaminopimelate from (S)-tetrahydrodipicolinate (succinylase route): step 3/3. In terms of biological role, catalyzes the hydrolysis of N-succinyl-L,L-diaminopimelic acid (SDAP), forming succinate and LL-2,6-diaminopimelate (DAP), an intermediate involved in the bacterial biosynthesis of lysine and meso-diaminopimelic acid, an essential component of bacterial cell walls. The chain is Succinyl-diaminopimelate desuccinylase from Ruegeria pomeroyi (strain ATCC 700808 / DSM 15171 / DSS-3) (Silicibacter pomeroyi).